The chain runs to 489 residues: Betaine aldehyde dehydrogenase (489 aa).

Residues T26 and D93 each contribute to the K(+) site. 150-152 (GAW) is an NAD(+) binding site. The Charge relay system role is filled by K162. Position 176–179 (176–179 (KPSE)) interacts with NAD(+). Residue V180 coordinates K(+). Position 229-232 (229-232 (GVET)) interacts with NAD(+). L245 is a binding site for K(+). The Proton acceptor role is filled by E251. 3 residues coordinate NAD(+): G253, C285, and E386. C285 (nucleophile) is an active-site residue. C285 is modified (cysteine sulfenic acid (-SOH)). 2 residues coordinate K(+): K456 and G459. E463 (charge relay system) is an active-site residue.

It belongs to the aldehyde dehydrogenase family. As to quaternary structure, dimer of dimers. K(+) is required as a cofactor.

The enzyme catalyses betaine aldehyde + NAD(+) + H2O = glycine betaine + NADH + 2 H(+). It functions in the pathway amine and polyamine biosynthesis; betaine biosynthesis via choline pathway; betaine from betaine aldehyde: step 1/1. Functionally, involved in the biosynthesis of the osmoprotectant glycine betaine. Catalyzes the irreversible oxidation of betaine aldehyde to the corresponding acid. The protein is Betaine aldehyde dehydrogenase of Burkholderia multivorans (strain ATCC 17616 / 249).